We begin with the raw amino-acid sequence, 161 residues long: Large ribosomal subunit protein bL17 (161 aa).

The span at 132–144 shows a compositional bias: basic and acidic residues; it reads ARAKRAEDNRKAL. The interval 132 to 161 is disordered; it reads ARAKRAEDNRKALEAQQAQAEAETTGETKA. The segment covering 145-161 has biased composition (low complexity); that stretch reads EAQQAQAEAETTGETKA.

It belongs to the bacterial ribosomal protein bL17 family. Part of the 50S ribosomal subunit. Contacts protein L32.

The protein is Large ribosomal subunit protein bL17 of Koribacter versatilis (strain Ellin345).